We begin with the raw amino-acid sequence, 136 residues long: Inner membrane protein YbhQ (136 aa).

At 1–12 the chain is on the cytoplasmic side; it reads MKWQQRVRVATG. Residues 13-33 traverse the membrane as a helical segment; it reads LSCWQIMLHLLVVALLVVGWM. The Periplasmic portion of the chain corresponds to 34-37; the sequence is SKTL. Residues 38-58 traverse the membrane as a helical segment; the sequence is VHVGVGLCALYCVTVVMMLVF. Residues 59 to 71 lie on the Cytoplasmic side of the membrane; sequence QRHPEQRWREVAD. A helical transmembrane segment spans residues 72–92; the sequence is VLEELTTTWYFGAALIVLWLL. Topologically, residues 93 to 99 are periplasmic; sequence SRVLENN. Residues 100-120 form a helical membrane-spanning segment; the sequence is FLLAIAGLAILAGPAVVSLLA. Residues 121–136 lie on the Cytoplasmic side of the membrane; sequence KDKKLHHLTSKHRVRR.

Its subcellular location is the cell inner membrane. The sequence is that of Inner membrane protein YbhQ (ybhQ) from Escherichia coli O157:H7.